Consider the following 146-residue polypeptide: Hemoglobin subunit beta-2 (146 aa).

Residues 2–146 enclose the Globin domain; that stretch reads EWTNFERATI…VVSSLGKQYH (145 aa). Residues histidine 63 and histidine 92 each contribute to the heme b site.

The protein belongs to the globin family. As to quaternary structure, hb2 is a heterotetramer of two alpha chains and two beta-2 chains. In terms of tissue distribution, red blood cells.

Involved in oxygen transport from gills to the various peripheral tissues. The chain is Hemoglobin subunit beta-2 (hbb2) from Cygnodraco mawsoni (Antarctic dragonfish).